Reading from the N-terminus, the 415-residue chain is Casein kinase I isoform delta (415 aa).

In terms of domain architecture, Protein kinase spans 9-277 (YRLGRKIGSG…YLRQLFRNLF (269 aa)). ATP contacts are provided by residues 15-23 (IGSGSFGDI) and lysine 38. Catalysis depends on aspartate 128, which acts as the Proton acceptor. The interval 278-364 (HRQGFSYDYV…TSPRPVSGME (87 aa)) is centrosomal localization signal (CLS). The span at 301-315 (ADDAERERRDREERL) shows a compositional bias: basic and acidic residues. The segment at 301–415 (ADDAERERRD…SSGLQSVVHR (115 aa)) is disordered. The autoinhibitory stretch occupies residues 317–342 (HSRNPATRGLPSTASGRLRGTQEVAP). Serine 328 and serine 331 each carry phosphoserine. The span at 347 to 358 (TPTSHTANTSPR) shows a compositional bias: polar residues. Serine 370 carries the phosphoserine modification. Position 375 is an omega-N-methylarginine (arginine 375). The span at 380-400 (NVSSSDLTGRQDTSRMSTSQI) shows a compositional bias: polar residues. A phosphoserine mark is found at serine 382, serine 383, serine 384, proline 401, serine 407, and serine 411.

It belongs to the protein kinase superfamily. CK1 Ser/Thr protein kinase family. Casein kinase I subfamily. Monomer. Component of the circadian core oscillator, which includes the CRY proteins, CLOCK, or NPAS2, BMAL1 or BMAL2, CSNK1D and/or CSNK1E, TIMELESS and the PER proteins. Interacts directly with PER1 and PER2 which may lead to their degradation. Interacts with MAP1A. Interacts with MAPT/TAU, DBNDD2, AIB1/NCOA3 and ESR1. Interacts with AKAP9/AKAP450; this interaction promotes centrosomal subcellular location. Binds to tubulins in mitotic cells upon DNA damage. Interacts with GJA1. Interacts with SNAPIN. Interacts with DNMT1. Interacts with DDX3X; this interaction enhances CSNK1D kinase activity in vitro, but it is unclear whether this interaction is physiologically relevant. Interacts with FAM83A, FAM83B, FAM83E and FAM83H (via DUF1669). Post-translationally, autophosphorylated on serine and threonine residues; this autophosphorylation represses activity. Reactivated by phosphatase-mediated dephosphorylation. May be dephosphorylated by PP1. As to expression, expressed ubiquitously. However, kinase activity is not uniform, with highest kinase activity in splenocytes.

The protein localises to the cytoplasm. It localises to the nucleus. Its subcellular location is the cytoskeleton. It is found in the microtubule organizing center. The protein resides in the centrosome. The protein localises to the perinuclear region. It localises to the cell membrane. Its subcellular location is the spindle. It is found in the golgi apparatus. It catalyses the reaction L-seryl-[protein] + ATP = O-phospho-L-seryl-[protein] + ADP + H(+). The enzyme catalyses L-threonyl-[protein] + ATP = O-phospho-L-threonyl-[protein] + ADP + H(+). It carries out the reaction L-seryl-[tau protein] + ATP = O-phospho-L-seryl-[tau protein] + ADP + H(+). The catalysed reaction is L-threonyl-[tau protein] + ATP = O-phospho-L-threonyl-[tau protein] + ADP + H(+). Its activity is regulated as follows. Exhibits substrate-dependent heparin activation. Drug-mediated inhibition leads to a delay of the oscillations with the magnitude of this effect dependent upon the timing of drug administration. Inhibited by phosphorylation. Functionally, essential serine/threonine-protein kinase that regulates diverse cellular growth and survival processes including Wnt signaling, DNA repair and circadian rhythms. It can phosphorylate a large number of proteins. Casein kinases are operationally defined by their preferential utilization of acidic proteins such as caseins as substrates. Phosphorylates connexin-43/GJA1, MAP1A, SNAPIN, MAPT/TAU, TOP2A, DCK, HIF1A, EIF6, p53/TP53, DVL2, DVL3, ESR1, AIB1/NCOA3, DNMT1, PKD2, YAP1, PER1 and PER2. Central component of the circadian clock. In balance with PP1, determines the circadian period length through the regulation of the speed and rhythmicity of PER1 and PER2 phosphorylation. Controls PER1 and PER2 nuclear transport and degradation. YAP1 phosphorylation promotes its SCF(beta-TRCP) E3 ubiquitin ligase-mediated ubiquitination and subsequent degradation. DNMT1 phosphorylation reduces its DNA-binding activity. Phosphorylation of ESR1 and AIB1/NCOA3 stimulates their activity and coactivation. Phosphorylation of DVL2 and DVL3 regulates WNT3A signaling pathway that controls neurite outgrowth. Phosphorylates NEDD9/HEF1. EIF6 phosphorylation promotes its nuclear export. Triggers down-regulation of dopamine receptors in the forebrain. Activates DCK in vitro by phosphorylation. TOP2A phosphorylation favors DNA cleavable complex formation. May regulate the formation of the mitotic spindle apparatus in extravillous trophoblast. Modulates connexin-43/GJA1 gap junction assembly by phosphorylation. Probably involved in lymphocyte physiology. Regulates fast synaptic transmission mediated by glutamate. This chain is Casein kinase I isoform delta (Csnk1d), found in Mus musculus (Mouse).